A 216-amino-acid chain; its full sequence is ATP-dependent Clp protease proteolytic subunit (216 aa).

The Nucleophile role is filled by Ser-120. His-145 is an active-site residue.

It belongs to the peptidase S14 family. In terms of assembly, fourteen ClpP subunits assemble into 2 heptameric rings which stack back to back to give a disk-like structure with a central cavity, resembling the structure of eukaryotic proteasomes.

The protein resides in the cytoplasm. The catalysed reaction is Hydrolysis of proteins to small peptides in the presence of ATP and magnesium. alpha-casein is the usual test substrate. In the absence of ATP, only oligopeptides shorter than five residues are hydrolyzed (such as succinyl-Leu-Tyr-|-NHMec, and Leu-Tyr-Leu-|-Tyr-Trp, in which cleavage of the -Tyr-|-Leu- and -Tyr-|-Trp bonds also occurs).. Cleaves peptides in various proteins in a process that requires ATP hydrolysis. Has a chymotrypsin-like activity. Plays a major role in the degradation of misfolded proteins. This is ATP-dependent Clp protease proteolytic subunit from Cupriavidus necator (strain ATCC 17699 / DSM 428 / KCTC 22496 / NCIMB 10442 / H16 / Stanier 337) (Ralstonia eutropha).